Reading from the N-terminus, the 79-residue chain is Small ribosomal subunit protein bS18 (79 aa).

The protein belongs to the bacterial ribosomal protein bS18 family. In terms of assembly, part of the 30S ribosomal subunit. Forms a tight heterodimer with protein bS6.

Its function is as follows. Binds as a heterodimer with protein bS6 to the central domain of the 16S rRNA, where it helps stabilize the platform of the 30S subunit. The polypeptide is Small ribosomal subunit protein bS18 (Rhodopseudomonas palustris (strain HaA2)).